Reading from the N-terminus, the 234-residue chain is Glucosamine-6-phosphate deaminase (234 aa).

Residue D62 is the Proton acceptor; for enolization step of the active site. The active-site For ring-opening step is N128. The Proton acceptor; for ring-opening step role is filled by H130. Catalysis depends on E135, which acts as the For ring-opening step.

The protein belongs to the glucosamine/galactosamine-6-phosphate isomerase family. NagB subfamily.

It carries out the reaction alpha-D-glucosamine 6-phosphate + H2O = beta-D-fructose 6-phosphate + NH4(+). The protein operates within amino-sugar metabolism; N-acetylneuraminate degradation; D-fructose 6-phosphate from N-acetylneuraminate: step 5/5. Functionally, catalyzes the reversible isomerization-deamination of glucosamine 6-phosphate (GlcN6P) to form fructose 6-phosphate (Fru6P) and ammonium ion. This is Glucosamine-6-phosphate deaminase from Streptococcus pyogenes serotype M18 (strain MGAS8232).